A 337-amino-acid chain; its full sequence is Phenylalanine--tRNA ligase alpha subunit (337 aa).

E258 lines the Mg(2+) pocket.

It belongs to the class-II aminoacyl-tRNA synthetase family. Phe-tRNA synthetase alpha subunit type 1 subfamily. In terms of assembly, tetramer of two alpha and two beta subunits. Requires Mg(2+) as cofactor.

Its subcellular location is the cytoplasm. The catalysed reaction is tRNA(Phe) + L-phenylalanine + ATP = L-phenylalanyl-tRNA(Phe) + AMP + diphosphate + H(+). The protein is Phenylalanine--tRNA ligase alpha subunit of Burkholderia cenocepacia (strain ATCC BAA-245 / DSM 16553 / LMG 16656 / NCTC 13227 / J2315 / CF5610) (Burkholderia cepacia (strain J2315)).